Consider the following 280-residue polypeptide: Acyl-[acyl-carrier-protein]--UDP-N-acetylglucosamine O-acyltransferase (280 aa).

This sequence belongs to the transferase hexapeptide repeat family. LpxA subfamily. In terms of assembly, homotrimer.

It is found in the cytoplasm. It carries out the reaction a (3R)-hydroxyacyl-[ACP] + UDP-N-acetyl-alpha-D-glucosamine = a UDP-3-O-[(3R)-3-hydroxyacyl]-N-acetyl-alpha-D-glucosamine + holo-[ACP]. The protein operates within glycolipid biosynthesis; lipid IV(A) biosynthesis; lipid IV(A) from (3R)-3-hydroxytetradecanoyl-[acyl-carrier-protein] and UDP-N-acetyl-alpha-D-glucosamine: step 1/6. Its function is as follows. Involved in the biosynthesis of lipid A, a phosphorylated glycolipid that anchors the lipopolysaccharide to the outer membrane of the cell. The protein is Acyl-[acyl-carrier-protein]--UDP-N-acetylglucosamine O-acyltransferase of Chlamydia muridarum (strain MoPn / Nigg).